Here is a 315-residue protein sequence, read N- to C-terminus: MGARLGRRAGPEAGSEAGAAAGCGPAPYERRVRWLREIQSTLRERRPERARQLLRLLRQDLGLERTLLPDILYRDVAFLNPVDPISHDLLVNLARDLQCPKKDYELWKSSDKICRQLIYHLTPHSKQQQGSSLRQRKTQSCLKSSLQKTLLAGETVDLSGIPLSTQDVQHITRYLSSHGAVLAVLDLSFTGLSDELLHLLLPSLWALPRLTQLLLNGNRLTRATARKLTDAIKDTTKFPALAWVDLGNNVDVASLPQPLLVGLRRRLSQRTSLPTIYEGLDLEPEGSAAGATTPASTWDSTAAGLGPEPQACCAR.

The segment at 1–23 (MGARLGRRAGPEAGSEAGAAAGC) is disordered. Low complexity predominate over residues 11–23 (PEAGSEAGAAAGC). LRR repeat units follow at residues 182–195 (LAVL…LSDE) and 207–220 (LPRL…GNRL). Positions 284–315 (PEGSAAGATTPASTWDSTAAGLGPEPQACCAR) are disordered. Positions 286 to 297 (GSAAGATTPAST) are enriched in low complexity.

It belongs to the LRRC75 family.

In terms of biological role, may suppress myogenic differentiation by modulating MYOG expression and Erk1/2 signaling. The protein is Leucine-rich repeat-containing protein 75B of Homo sapiens (Human).